Reading from the N-terminus, the 31-residue chain is Cyclotide glopa C (31 aa).

Positions 1-31 form a cross-link, cyclopeptide (Gly-Asn); that stretch reads GDLPICGETCFEGGNCRIPGCTCVWPFCSKN. 3 cysteine pairs are disulfide-bonded: Cys-6–Cys-21, Cys-10–Cys-23, and Cys-16–Cys-28.

This is a cyclic peptide.

Probably participates in a plant defense mechanism. The polypeptide is Cyclotide glopa C (Gloeospermum pauciflorum).